Here is a 559-residue protein sequence, read N- to C-terminus: N-acetylglucosamine-6-sulfatase (559 aa).

The disordered stretch occupies residues 1–26 (MRFLSLAPDRPRRGGPRHLPSGSPAP). Positions 1–47 (MRFLSLAPDRPRRGGPRHLPSGSPAPPPPPPLLLLLLLGGCLGVSGA) are cleaved as a signal peptide. Residues D62, D63, and C98 each coordinate Ca(2+). The Nucleophile role is filled by C98. At C98 the chain carries 3-oxoalanine (Cys). N-linked (GlcNAc...) asparagine glycosylation is found at N118, N124, N190, N205, N217, N286, and N324. Ca(2+) contacts are provided by D333 and N334. Residues N369, N394, N412, N429, N456, and N487 are each glycosylated (N-linked (GlcNAc...) asparagine). S548 is modified (phosphoserine).

This sequence belongs to the sulfatase family. Ca(2+) is required as a cofactor. Post-translationally, processed by internal peptidase. The conversion to 3-oxoalanine (also known as C-formylglycine, FGly), of a serine or cysteine residue in prokaryotes and of a cysteine residue in eukaryotes, is critical for catalytic activity.

Its subcellular location is the lysosome. The enzyme catalyses Hydrolysis of the 6-sulfate groups of the N-acetyl-D-glucosamine 6-sulfate units of heparan sulfate and keratan sulfate.. In terms of biological role, hydrolyzes 6-sulfate groups in N-acetyl-d-glucosaminide units of heparin sulfate and keratan sulfate. This is N-acetylglucosamine-6-sulfatase (GNS) from Capra hircus (Goat).